The chain runs to 81 residues: MQNDAGEFVDLYVPRKCSASNRIIGAKDHASIQINIAEVDRVTGRFNGQFKTYAICGAIRRMGEADDSLLRLAKTDSIVAK.

This sequence belongs to the eukaryotic ribosomal protein eS21 family. In terms of assembly, component of the 40S small ribosomal subunit.

The protein localises to the cytoplasm. It is found in the cytosol. Its subcellular location is the rough endoplasmic reticulum. In terms of biological role, component of the small ribosomal subunit. The ribosome is a large ribonucleoprotein complex responsible for the synthesis of proteins in the cell. This is Small ribosomal subunit protein eS21 (rps21) from Danio rerio (Zebrafish).